The following is a 149-amino-acid chain: SsrA-binding protein (149 aa).

It belongs to the SmpB family.

The protein resides in the cytoplasm. In terms of biological role, required for rescue of stalled ribosomes mediated by trans-translation. Binds to transfer-messenger RNA (tmRNA), required for stable association of tmRNA with ribosomes. tmRNA and SmpB together mimic tRNA shape, replacing the anticodon stem-loop with SmpB. tmRNA is encoded by the ssrA gene; the 2 termini fold to resemble tRNA(Ala) and it encodes a 'tag peptide', a short internal open reading frame. During trans-translation Ala-aminoacylated tmRNA acts like a tRNA, entering the A-site of stalled ribosomes, displacing the stalled mRNA. The ribosome then switches to translate the ORF on the tmRNA; the nascent peptide is terminated with the 'tag peptide' encoded by the tmRNA and targeted for degradation. The ribosome is freed to recommence translation, which seems to be the essential function of trans-translation. The sequence is that of SsrA-binding protein from Acholeplasma laidlawii (strain PG-8A).